The following is a 416-amino-acid chain: MFVESAKKALLALSLLAASAQAVPRVRRQGASSSFDYKSQIVRGVNLGGWLVTEPWITPSLYDSTGGGAVDEWTLCQILGKDEAQAKLSSHWSSFITQSDFDRMAQAGLNHVRIPIGYWAVAPIDGEPYVSGQIDYLDQAVTWARAAGLKVLVDLHGAPGSQNGFDNSGHRGPIQWQQGDTVNQTMTAFDALARRYAQSDTVTAIEAVNEPNIPGGVNEDGLKNYYYGALADVQRLNPSTTLFMSDGFQPVESWNGFMQGSNVVMDTHHYQVFDTGLLSMSIDDHVKTACSLATQHTMQSDKPVVVGEWTGALTDCAKYLNGVGNAARYDGTYMSTTKYGDCTGKSTGSVADFSADEKANTRRYIEAQLEAYEMKSGWLFWTWKTEGAPGWDMQDLLANQLFPTSPTDRQYPHQCS.

The signal sequence occupies residues 1–22 (MFVESAKKALLALSLLAASAQA). Residue Asn183 is glycosylated (N-linked (GlcNAc...) asparagine). The active-site Proton donor is the Glu210. 2 disulfides stabilise this stretch: Cys290-Cys415 and Cys316-Cys342. The Nucleophile role is filled by Glu308.

The protein belongs to the glycosyl hydrolase 5 (cellulase A) family. As to quaternary structure, monomer. Requires Mn(2+) as cofactor.

It localises to the secreted. It carries out the reaction Successive hydrolysis of beta-D-glucose units from the non-reducing ends of (1-&gt;3)-beta-D-glucans, releasing alpha-glucose.. Beta-glucanases participate in the metabolism of beta-glucan, the main structural component of the cell wall. It could also function biosynthetically as a transglycosylase. This chain is Probable glucan 1,3-beta-glucosidase A (exgA), found in Aspergillus niger (strain ATCC MYA-4892 / CBS 513.88 / FGSC A1513).